A 447-amino-acid chain; its full sequence is Probable butyrate:acetyl-CoA coenzyme A-transferase (447 aa).

A CoA-binding site is contributed by 220–224 (GIGGT). Glu-245 serves as the catalytic 5-glutamyl coenzyme A thioester intermediate. Residues Ile-320 and Gly-343 each contribute to the CoA site.

Belongs to the acetyl-CoA hydrolase/transferase family.

Its subcellular location is the cytoplasm. The enzyme catalyses butanoate + acetyl-CoA = butanoyl-CoA + acetate. It functions in the pathway lipid metabolism; butanoate metabolism. Coenzyme A-transferase that converts butyrate to butyryl-CoA. Involved in the syntrophic growth of S.wolfei on butyrate in cooperation with methanogens or an appropriate hydrogen-scavenging bacterium, as part of the butyrate oxidation pathway. In Syntrophomonas wolfei subsp. wolfei (strain DSM 2245B / Goettingen), this protein is Probable butyrate:acetyl-CoA coenzyme A-transferase.